Consider the following 255-residue polypeptide: Hydroxyacylglutathione hydrolase (255 aa).

Zn(2+)-binding residues include His53, His55, Asp57, His58, His110, Asp127, and His165.

It belongs to the metallo-beta-lactamase superfamily. Glyoxalase II family. In terms of assembly, monomer. Zn(2+) serves as cofactor.

It catalyses the reaction an S-(2-hydroxyacyl)glutathione + H2O = a 2-hydroxy carboxylate + glutathione + H(+). Its pathway is secondary metabolite metabolism; methylglyoxal degradation; (R)-lactate from methylglyoxal: step 2/2. Its function is as follows. Thiolesterase that catalyzes the hydrolysis of S-D-lactoyl-glutathione to form glutathione and D-lactic acid. The chain is Hydroxyacylglutathione hydrolase from Xanthomonas campestris pv. campestris (strain 8004).